The sequence spans 296 residues: Nucleotide-binding protein str0831 (296 aa).

13–20 (GMSGAGKT) is a binding site for ATP. 63-66 (DMRS) lines the GTP pocket.

Belongs to the RapZ-like family.

In terms of biological role, displays ATPase and GTPase activities. The chain is Nucleotide-binding protein str0831 from Streptococcus thermophilus (strain CNRZ 1066).